We begin with the raw amino-acid sequence, 359 residues long: 3-dehydroquinate synthase (359 aa).

NAD(+) contacts are provided by residues 71-76 (DGEQYK), 105-109 (GVIGD), 129-130 (TT), lysine 142, lysine 151, and 169-172 (CLST). Zn(2+) is bound by residues glutamate 184, histidine 247, and histidine 264.

Belongs to the sugar phosphate cyclases superfamily. Dehydroquinate synthase family. Co(2+) is required as a cofactor. Requires Zn(2+) as cofactor. It depends on NAD(+) as a cofactor.

Its subcellular location is the cytoplasm. The catalysed reaction is 7-phospho-2-dehydro-3-deoxy-D-arabino-heptonate = 3-dehydroquinate + phosphate. Its pathway is metabolic intermediate biosynthesis; chorismate biosynthesis; chorismate from D-erythrose 4-phosphate and phosphoenolpyruvate: step 2/7. Catalyzes the conversion of 3-deoxy-D-arabino-heptulosonate 7-phosphate (DAHP) to dehydroquinate (DHQ). This is 3-dehydroquinate synthase from Shewanella halifaxensis (strain HAW-EB4).